Reading from the N-terminus, the 517-residue chain is Retrotransposon-like protein 1 (517 aa).

2 disordered regions span residues 1–29 and 142–161; these read MEVNEGQDTEGGSSRAQTLTPPPNPQQQL and EEERDKRKKEEQFREADARS.

In Caenorhabditis elegans, this protein is Retrotransposon-like protein 1 (retr-1).